A 557-amino-acid polypeptide reads, in one-letter code: Urocanate hydratase (557 aa).

Residues 1–20 are disordered; that stretch reads MSNPRHNEREVRSPRGDELN. NAD(+) contacts are provided by residues 52 to 53, glutamine 130, 176 to 178, glutamate 196, arginine 201, 242 to 243, 263 to 267, 273 to 274, and tyrosine 322; these read GG, GMG, NA, QTSAH, and YL. The active site involves cysteine 410. Glycine 492 is an NAD(+) binding site.

This sequence belongs to the urocanase family. It depends on NAD(+) as a cofactor.

Its subcellular location is the cytoplasm. The catalysed reaction is 4-imidazolone-5-propanoate = trans-urocanate + H2O. It participates in amino-acid degradation; L-histidine degradation into L-glutamate; N-formimidoyl-L-glutamate from L-histidine: step 2/3. Catalyzes the conversion of urocanate to 4-imidazolone-5-propionate. The chain is Urocanate hydratase from Brucella suis (strain ATCC 23445 / NCTC 10510).